Consider the following 509-residue polypeptide: Steroid 17-alpha-hydroxylase/17,20 lyase (509 aa).

Asn202 is a substrate binding site. Residue Cys442 participates in heme binding.

The protein belongs to the cytochrome P450 family. Requires heme as cofactor.

The protein localises to the endoplasmic reticulum membrane. It localises to the microsome membrane. The enzyme catalyses a C21-steroid + reduced [NADPH--hemoprotein reductase] + O2 = a 17alpha-hydroxy-C21-steroid + oxidized [NADPH--hemoprotein reductase] + H2O + H(+). It carries out the reaction progesterone + reduced [NADPH--hemoprotein reductase] + O2 = 17alpha-hydroxyprogesterone + oxidized [NADPH--hemoprotein reductase] + H2O + H(+). The catalysed reaction is pregnenolone + reduced [NADPH--hemoprotein reductase] + O2 = 17alpha-hydroxypregnenolone + oxidized [NADPH--hemoprotein reductase] + H2O + H(+). It catalyses the reaction 17alpha-hydroxyprogesterone + reduced [NADPH--hemoprotein reductase] + O2 = androst-4-ene-3,17-dione + acetate + oxidized [NADPH--hemoprotein reductase] + H2O + 2 H(+). The enzyme catalyses 17alpha-hydroxyprogesterone + reduced [NADPH--hemoprotein reductase] + O2 = 16alpha,17alpha-dihydroxyprogesterone + oxidized [NADPH--hemoprotein reductase] + H2O + H(+). It carries out the reaction 16alpha,17alpha-dihydroxyprogesterone + reduced [NADPH--hemoprotein reductase] + O2 = 6beta,16alpha,17alpha-trihydroxyprogesterone + oxidized [NADPH--hemoprotein reductase] + H2O + H(+). The catalysed reaction is 17alpha-hydroxypregnenolone + reduced [NADPH--hemoprotein reductase] + O2 = 3beta-hydroxyandrost-5-en-17-one + acetate + oxidized [NADPH--hemoprotein reductase] + H2O + 2 H(+). It catalyses the reaction 16alpha,17alpha-dihydroxypregnenolone + reduced [NADPH--hemoprotein reductase] + O2 = 3beta,16alpha-dihydroxy-androst-5-en-17-one + acetate + oxidized [NADPH--hemoprotein reductase] + H2O + 2 H(+). The enzyme catalyses 3beta-hydroxyandrost-5-en-17-one + reduced [NADPH--hemoprotein reductase] + O2 = 3beta,16alpha-dihydroxy-androst-5-en-17-one + oxidized [NADPH--hemoprotein reductase] + H2O + H(+). It carries out the reaction androst-4-ene-3,17-dione + reduced [NADPH--hemoprotein reductase] + O2 = 16alpha-hydroxyandrost-4-ene-3,17-dione + oxidized [NADPH--hemoprotein reductase] + H2O + H(+). It participates in steroid hormone biosynthesis. It functions in the pathway steroid biosynthesis; glucocorticoid biosynthesis. Regulated predominantly by intracellular cAMP levels. The 17,20-lyase activity is stimulated by cytochrome b5, which acts as an allosteric effector increasing the Vmax of the lyase activity. Its function is as follows. A cytochrome P450 monooxygenase involved in corticoid and androgen biosynthesis. Catalyzes 17-alpha hydroxylation of C21 steroids, which is common for both pathways. A second oxidative step, required only for androgen synthesis, involves an acyl-carbon cleavage. The 17-alpha hydroxy intermediates, as part of adrenal glucocorticoids biosynthesis pathway, are precursors of cortisol. Hydroxylates steroid hormones, pregnenolone and progesterone to form 17-alpha hydroxy metabolites, followed by the cleavage of the C17-C20 bond to form C19 steroids, dehydroepiandrosterone (DHEA) and androstenedione. Has 16-alpha hydroxylase activity. Catalyzes 16-alpha hydroxylation of 17-alpha hydroxy pregnenolone, followed by the cleavage of the C17-C20 bond to form 16-alpha-hydroxy DHEA. Also 16-alpha hydroxylates androgens, relevant for estriol synthesis. Mechanistically, uses molecular oxygen inserting one oxygen atom into a substrate, and reducing the second into a water molecule, with two electrons provided by NADPH via cytochrome P450 reductase (CPR; NADPH-ferrihemoprotein reductase). The protein is Steroid 17-alpha-hydroxylase/17,20 lyase (CYP17A1) of Bison bison (American bison).